Consider the following 148-residue polypeptide: UPF0179 protein Mevan_0979 (148 aa).

This sequence belongs to the UPF0179 family.

This is UPF0179 protein Mevan_0979 from Methanococcus vannielii (strain ATCC 35089 / DSM 1224 / JCM 13029 / OCM 148 / SB).